The following is a 32-amino-acid chain: Phospholipase A2 (32 aa).

Y16, G18, and G20 together coordinate Ca(2+).

The cofactor is Ca(2+). Expressed by the venom gland.

It localises to the secreted. It catalyses the reaction a 1,2-diacyl-sn-glycero-3-phosphocholine + H2O = a 1-acyl-sn-glycero-3-phosphocholine + a fatty acid + H(+). Functionally, PLA2 catalyzes the calcium-dependent hydrolysis of the 2-acyl groups in 3-sn-phosphoglycerides. This Micrurus lemniscatus (South American coral snake) protein is Phospholipase A2.